Reading from the N-terminus, the 413-residue chain is Falstatin (413 aa).

Residues 1–21 (MNLLVFFCFFLLSCIVHLSRC) form the signal peptide. Positions 284–294 (LDSVNGNGFVW) match the BC loop; binds and inhibits the active site cavity of cysteine proteases motif. Composition is skewed to polar residues over residues 325 to 339 (ISVTNPVPIPKNSNT) and 346 to 360 (NNKQDGSQNNTTTNH). The disordered stretch occupies residues 325–367 (ISVTNPVPIPKNSNTNKDDSINNKQDGSQNNTTTNHFPKPREQ).

Belongs to the protease inhibitor I71 family. Oligomer; probably composed of 10 monomers. Post-translationally, proteolytically cleaved.

Its subcellular location is the secreted. It is found in the cytoplasmic vesicle. The protein localises to the secretory vesicle. It localises to the microneme. The protein resides in the parasitophorous vacuole lumen. Its subcellular location is the host cytoplasm. Functionally, cysteine protease inhibitor. Inhibits cysteine protease falcipains FP2 and FP3. Required for the invasion of host erythrocytes by merozoites. In the mosquito vector, essential for the gliding motility of hemocoel sporozoites and, therefore, for salivary gland invasion and the subsequent transmission from the mosquito to the mammalian host. Required for the invasion of host hepatocytes. During the liver stage, may prevent host hepatocyte cell death likely by inhibiting host cysteine proteases. The sequence is that of Falstatin from Plasmodium falciparum (isolate 3D7).